The following is a 420-amino-acid chain: Adenylosuccinate synthetase (420 aa).

Residues 11 to 17 and 39 to 41 each bind GTP; these read GDEGKGK and GHT. The active-site Proton acceptor is the Asp-12. Mg(2+)-binding residues include Asp-12 and Gly-39. IMP is bound by residues 12 to 15, 37 to 40, Thr-129, Arg-143, Asn-218, Thr-233, and Arg-297; these read DEGK and NAGH. His-40 (proton donor) is an active-site residue. 293–299 contacts substrate; the sequence is VTTGRKR. GTP is bound by residues Arg-299, 325–327, and 407–409; these read KLD and GTG.

The protein belongs to the adenylosuccinate synthetase family. Homodimer. The cofactor is Mg(2+).

The protein resides in the cytoplasm. It carries out the reaction IMP + L-aspartate + GTP = N(6)-(1,2-dicarboxyethyl)-AMP + GDP + phosphate + 2 H(+). It participates in purine metabolism; AMP biosynthesis via de novo pathway; AMP from IMP: step 1/2. Its function is as follows. Plays an important role in the de novo pathway and in the salvage pathway of purine nucleotide biosynthesis. Catalyzes the first committed step in the biosynthesis of AMP from IMP. The protein is Adenylosuccinate synthetase of Uncinocarpus reesii (strain UAMH 1704).